The primary structure comprises 388 residues: D-xylose dehydrogenase (388 aa).

This sequence belongs to the Gfo/Idh/MocA family. Homotetramer. It depends on Zn(2+) as a cofactor.

It carries out the reaction D-xylose + NADP(+) = D-xylono-1,5-lactone + NADPH + H(+). It catalyses the reaction D-xylose + NAD(+) = D-xylono-1,5-lactone + NADH + H(+). It participates in carbohydrate metabolism; D-xylose degradation. Functionally, catalyzes the NADP(+)-dependent oxidation of D-xylose. Is able to use both NADP(+) and NAD(+); however, the enzyme shows a very strong preference for NADP(+). Is likely involved in the first step of the oxidative D-xylose degradation pathway. The sequence is that of D-xylose dehydrogenase (xdh) from Paenarthrobacter nicotinovorans (Arthrobacter nicotinovorans).